A 510-amino-acid polypeptide reads, in one-letter code: MKDILQELENRRAIARAGGGQRRVEAQHKRGKLTARERIELLLDEGSFEEFDMFVRHRCTDFGMQDDRPAGDGVVTGWGTINGRMVYVFSQDFTVFGGSLSETHAQKICKIMDMAMQNGAPVIGLNDSGGARIQEGVASLAGYADVFQRNIMASGVIPQISVIMGPCAGGAVYSPAMTDFIFMVRDTSYMFVTGPDVVKTVTNEVVTAEELGGASTHTKKSSVADGAFENDVEALYEIRRLVDFLPLSNRTPAPVRPFFDDVARIEDSLDTLIPDNPNQPYDMKELILKIADEADFYEIQKDFAANIITGFIRLEGQTVGVVANQPMVLAGCLDIDSSRKAARFVRFCDAFNIPILTLVDVPGFLPGTGQEYGGVIKHGAKLLFAYGEATVPKVTVITRKAYGGAYDVMASKHLRGDFNYAWPTAEIAVMGAKGATEILYRSELGDKEKIAARAKEYEDRFANPFVAAERGFIDEVIMPHSTRRRVSKAFASLRNKKLANPWKKHDNIPL.

Residues 1 to 257 (MKDILQELEN…SNRTPAPVRP (257 aa)) enclose the CoA carboxyltransferase N-terminal domain. The interval 1-504 (MKDILQELEN…NKKLANPWKK (504 aa)) is carboxyltransferase. A CoA carboxyltransferase C-terminal domain is found at 264–504 (RIEDSLDTLI…NKKLANPWKK (241 aa)).

The protein belongs to the AccD/PCCB family. Probably a dodecamer composed of six biotin-containing alpha subunits and six beta subunits.

It catalyses the reaction propanoyl-CoA + hydrogencarbonate + ATP = (S)-methylmalonyl-CoA + ADP + phosphate + H(+). Its pathway is metabolic intermediate metabolism; propanoyl-CoA degradation; succinyl-CoA from propanoyl-CoA: step 1/3. The protein is Propionyl-CoA carboxylase beta chain of Cereibacter sphaeroides (strain ATCC 17023 / DSM 158 / JCM 6121 / CCUG 31486 / LMG 2827 / NBRC 12203 / NCIMB 8253 / ATH 2.4.1.) (Rhodobacter sphaeroides).